Reading from the N-terminus, the 883-residue chain is DNA mismatch repair protein MutS (883 aa).

602 to 609 (GPNMSGKS) contacts ATP.

It belongs to the DNA mismatch repair MutS family.

In terms of biological role, this protein is involved in the repair of mismatches in DNA. It is possible that it carries out the mismatch recognition step. This protein has a weak ATPase activity. The chain is DNA mismatch repair protein MutS from Staphylococcus haemolyticus (strain JCSC1435).